A 622-amino-acid polypeptide reads, in one-letter code: Probable ATP-citrate synthase (622 aa).

Residues 228-248 (ALRY…ELGG) and 279-305 (FPTE…KNKA) contribute to the ATP site. Glu-245 contributes to the Mg(2+) binding site. The active-site Tele-phosphohistidine intermediate is the His-287. Residue 306–316 (LREAGAVVPTS) participates in CoA binding.

This sequence in the N-terminal section; belongs to the succinate/malate CoA ligase beta subunit family. The protein in the C-terminal section; belongs to the succinate/malate CoA ligase alpha subunit family. In terms of assembly, homotetramer.

Its subcellular location is the cytoplasm. It carries out the reaction oxaloacetate + acetyl-CoA + ADP + phosphate = citrate + ATP + CoA. In terms of biological role, catalyzes the cleavage of citrate into oxaloacetate and acetyl-CoA, the latter serving as common substrate in multiple biochemical reactions in protein, carbohydrate and lipid metabolism. The chain is Probable ATP-citrate synthase (acly) from Dictyostelium discoideum (Social amoeba).